The primary structure comprises 113 residues: Meiotically up-regulated gene 98 protein, mitochondrial (113 aa).

Its subcellular location is the mitochondrion. Functionally, has a role in meiosis. The sequence is that of Meiotically up-regulated gene 98 protein, mitochondrial (mug98) from Schizosaccharomyces pombe (strain 972 / ATCC 24843) (Fission yeast).